A 257-amino-acid polypeptide reads, in one-letter code: UPF0246 protein Ping_3037 (257 aa).

It belongs to the UPF0246 family.

The sequence is that of UPF0246 protein Ping_3037 from Psychromonas ingrahamii (strain DSM 17664 / CCUG 51855 / 37).